The following is a 324-amino-acid chain: GTPase Era (324 aa).

An Era-type G domain is found at 31–199 (KSGFIGIIGR…QELLVEHLEH (169 aa)). The segment at 39–46 (GRPNVGKS) is G1. 39–46 (GRPNVGKS) serves as a coordination point for GTP. A G2 region spans residues 65–69 (QTTRN). The tract at residues 86 to 89 (DTPG) is G3. Residues 86–90 (DTPGI) and 148–151 (NKVD) each bind GTP. Positions 148–151 (NKVD) are G4. The segment at 178 to 180 (FSA) is G5. Residues 230-306 (TREEVPHSVA…YLELFVKVQP (77 aa)) enclose the KH type-2 domain.

It belongs to the TRAFAC class TrmE-Era-EngA-EngB-Septin-like GTPase superfamily. Era GTPase family. Monomer.

It localises to the cytoplasm. The protein localises to the cell inner membrane. In terms of biological role, an essential GTPase that binds both GDP and GTP, with rapid nucleotide exchange. Plays a role in 16S rRNA processing and 30S ribosomal subunit biogenesis and possibly also in cell cycle regulation and energy metabolism. In Nostoc sp. (strain PCC 7120 / SAG 25.82 / UTEX 2576), this protein is GTPase Era.